Here is a 983-residue protein sequence, read N- to C-terminus: UPF0746 protein DDB_G0280809 (983 aa).

Positions 1–21 are enriched in basic and acidic residues; that stretch reads MISNKRKEIDTINEHHEKNND. Residues 1 to 26 form a disordered region; the sequence is MISNKRKEIDTINEHHEKNNDDSDGI. The 35-residue stretch at 42–76 folds into the SAP domain; it reads SGSTNYRELQIIAKSLGLASNGKKQLVYNRIEGYF. Positions 391 to 413 are disordered; the sequence is HTTPTSTSTSTSTSTSTYTSTST. A compositionally biased stretch (low complexity) spans 392 to 413; it reads TTPTSTSTSTSTSTSTYTSTST.

This sequence belongs to the UPF0746 family.

The sequence is that of UPF0746 protein DDB_G0280809 from Dictyostelium discoideum (Social amoeba).